We begin with the raw amino-acid sequence, 529 residues long: E3 ubiquitin-protein ligase arih1 (529 aa).

Disordered stretches follow at residues 1–30 (MDSD…EDDL) and 49–68 (GICG…GEEE). Residues 51–64 (CGEGGGSALGPGPG) show a composition bias toward gly residues. The tract at residues 77–125 (TAEQILQHMVECIREVNEVIQNPATITRILLSHFNWDKEKLMERYFDGN) is UBA-like. The interval 154–365 (QDMPCQICYL…SAWYNCNRYN (212 aa)) is TRIAD supradomain. 18 residues coordinate Zn(2+): C158, C161, C175, H177, C180, C183, C203, C208, C248, C253, C269, C271, C276, C279, H284, C289, C316, and C319. The RING-type 1 zinc finger occupies 158–208 (CQICYLNYPNSYFTGLECGHKFCMQCWSEYLTTKIIEEGMGQTISCPAHGC). The IBR-type zinc-finger motif lies at 228–289 (LKYQHLITNS…GENWHDPVKC (62 aa)). Residues 316 to 347 (CPKCHVTIEKDGGCNHMVCRNQNCKAEFCWVC) form an RING-type 2; atypical zinc finger. Residue C329 is part of the active site. Positions 334, 339, 344, 347, 354, and 361 each coordinate Zn(2+). Residues 380 to 529 (RAALQRYLFY…EKDLWEYIED (150 aa)) form an ariadne domain region.

Belongs to the RBR family. Ariadne subfamily. Interacts (via the first RING-type zinc finger) with ube2l3. Associates with cullin-RING ubiquitin ligase (CRL) complexes containing neddylated cullin.

Its subcellular location is the cytoplasm. It localises to the nucleus. The enzyme catalyses [E2 ubiquitin-conjugating enzyme]-S-ubiquitinyl-L-cysteine + [acceptor protein]-L-lysine = [E2 ubiquitin-conjugating enzyme]-L-cysteine + [acceptor protein]-N(6)-ubiquitinyl-L-lysine.. Its pathway is protein modification; protein ubiquitination. Its activity is regulated as follows. Autoinhibited by the ariadne domain, which masks the second RING-type zinc finger that contains the active site and inhibits the E3 activity. Inhibition is relieved upon binding to neddylated cullin-RING ubiquitin ligase complexes, which activate the E3 ligase activity of ARIH1. In terms of biological role, E3 ubiquitin-protein ligase, which catalyzes ubiquitination of target proteins together with ubiquitin-conjugating enzyme E2 ube2l3. Acts as an atypical E3 ubiquitin-protein ligase by working together with cullin-RING ubiquitin ligase (CRL) complexes and initiating ubiquitination of CRL substrates: associates with CRL complexes and specifically mediates addition of the first ubiquitin on CRLs targets. The initial ubiquitin is then elongated. E3 ubiquitin-protein ligase activity is activated upon binding to neddylated cullin-RING ubiquitin ligase complexes. The chain is E3 ubiquitin-protein ligase arih1 (arih1) from Xenopus tropicalis (Western clawed frog).